Consider the following 88-residue polypeptide: uncharacterized protein (88 aa).

Positions 30–49 (VPEVMHLCGLSRSTIYELIR) form a DNA-binding region, H-T-H motif.

This sequence to E.coli prophage CP4-57 regulatory protein alpA.

This is an uncharacterized protein from Escherichia coli (Bacteriophage P4).